A 327-amino-acid polypeptide reads, in one-letter code: Clavesin-2 (327 aa).

The CRAL-TRIO domain maps to 96 to 257 (IKQALKDGFP…EFGGMLPPYD (162 aa)). The tract at residues 288-327 (VDKELSPKSMKRSQSVVDPTALKRMDKSEEENMQPLLSLD) is disordered. Position 325 is a phosphoserine (S325).

Forms a complex with clathrin heavy chain and gamma-adaptin. Expressed in brain with no expression detected in non-neuronal tissues (at protein level).

Its subcellular location is the golgi apparatus. The protein localises to the trans-Golgi network membrane. It is found in the early endosome membrane. The protein resides in the cytoplasmic vesicle. It localises to the clathrin-coated vesicle. Its function is as follows. Required for normal morphology of late endosomes and/or lysosomes in neurons. Binds phosphatidylinositol 3,5-bisphosphate (PtdIns(3,5)P2). The chain is Clavesin-2 from Rattus norvegicus (Rat).